Here is a 113-residue protein sequence, read N- to C-terminus: MQPGGQPDMSQLLAQAQQMQQQLMAAQQEMAEAEVTGQAGGGLVTATVKGTGEVVGLKIDPKVVDPDDVETLQDLVIGAIEDASSKAQEIAAQKLGPLAGGFGGGGLPGLPGF.

This sequence belongs to the YbaB/EbfC family. Homodimer.

Its subcellular location is the cytoplasm. The protein localises to the nucleoid. Binds to DNA and alters its conformation. May be involved in regulation of gene expression, nucleoid organization and DNA protection. The polypeptide is Nucleoid-associated protein ROP_41370 (Rhodococcus opacus (strain B4)).